Here is a 61-residue protein sequence, read N- to C-terminus: Putative neurotoxin-D (61 aa).

An N-terminal signal peptide occupies residues 1 to 19; that stretch reads MRTTVAILLVLFALSAILA. 3 cysteine pairs are disulfide-bonded: cysteine 31–cysteine 51, cysteine 37–cysteine 56, and cysteine 39–cysteine 58.

In terms of tissue distribution, expressed by the venom gland.

The protein resides in the secreted. This chain is Putative neurotoxin-D, found in Lychas mucronatus (Chinese swimming scorpion).